Reading from the N-terminus, the 219-residue chain is Oligoribonuclease (219 aa).

An Exonuclease domain is found at 30–193 (LVWLDMEMTG…ADIVESIEEL (164 aa)). Tyr151 is a catalytic residue.

It belongs to the oligoribonuclease family.

It localises to the cytoplasm. In terms of biological role, 3'-to-5' exoribonuclease specific for small oligoribonucleotides. This chain is Oligoribonuclease, found in Ralstonia nicotianae (strain ATCC BAA-1114 / GMI1000) (Ralstonia solanacearum).